The sequence spans 511 residues: Aldehyde dehydrogenase X, mitochondrial (511 aa).

A mitochondrion-targeting transit peptide spans 1-11 (PRLFALHHSAT). N6-acetyllysine is present on Lys-45. Residue Lys-46 is modified to N6-acetyllysine; alternate. Lys-46 bears the N6-succinyllysine; alternate mark. Lys-75 carries the post-translational modification N6-succinyllysine. NAD(+) is bound at residue 256 to 261 (GSTKVG). Glu-279 functions as the Proton acceptor in the catalytic mechanism. The active-site Nucleophile is Cys-313. N6-acetyllysine; alternate occurs at positions 377, 393, and 420. 3 positions are modified to N6-succinyllysine; alternate: Lys-377, Lys-393, and Lys-420. N6-acetyllysine is present on Lys-423.

Belongs to the aldehyde dehydrogenase family. As to quaternary structure, homotetramer.

Its subcellular location is the mitochondrion matrix. It catalyses the reaction an aldehyde + NAD(+) + H2O = a carboxylate + NADH + 2 H(+). Its pathway is alcohol metabolism; ethanol degradation; acetate from ethanol: step 2/2. Its function is as follows. ALDHs play a major role in the detoxification of alcohol-derived acetaldehyde. They are involved in the metabolism of corticosteroids, biogenic amines, neurotransmitters, and lipid peroxidation. In the cornea, this enzyme may help in the absorption of the damaging UV-B, as well as in the detoxification of the UV-induced peroxidic aldehydes. This is Aldehyde dehydrogenase X, mitochondrial (ALDH1B1) from Bos taurus (Bovine).